A 400-amino-acid chain; its full sequence is Tryptophan 2,3-dioxygenase (400 aa).

Substrate contacts are provided by residues 75–79 (FIIIH) and Arg146. His332 provides a ligand contact to heme. Thr346 contacts substrate.

This sequence belongs to the tryptophan 2,3-dioxygenase family. As to quaternary structure, homotetramer. Dimer of dimers. Requires heme as cofactor.

The catalysed reaction is L-tryptophan + O2 = N-formyl-L-kynurenine. It participates in amino-acid degradation; L-tryptophan degradation via kynurenine pathway; L-kynurenine from L-tryptophan: step 1/2. Heme-dependent dioxygenase that catalyzes the oxidative cleavage of the L-tryptophan (L-Trp) pyrrole ring and converts L-tryptophan to N-formyl-L-kynurenine. Catalyzes the oxidative cleavage of the indole moiety. The chain is Tryptophan 2,3-dioxygenase from Dictyostelium discoideum (Social amoeba).